A 507-amino-acid chain; its full sequence is Cytochrome P450 monooxygenase nodZ (507 aa).

Transmembrane regions (helical) follow at residues 1–21 (MITA…FSLL) and 205–225 (GFLH…PWFL). N-linked (GlcNAc...) asparagine glycosylation occurs at Asn352. Cys445 is a binding site for heme.

The protein belongs to the cytochrome P450 family. It depends on heme as a cofactor.

It is found in the membrane. It functions in the pathway secondary metabolite biosynthesis. Cytochrome P450 monooxygenase; part of the gene cluster that mediates the biosynthesis of the indole diterpenes nodulisporic acids (NA). Nodulisporic acid A (NAA) and its chemically modified derivatives are of particular significance because of their highly potent insecticidal activity against blood-feeding arthropods and lack of observable adverse effects on mammals, in particular the tremogenicity associated with the paspaline-derived IDTs is not observed. The geranylgeranyl diphosphate (GGPP) synthase ggs1, localized outside of the cluster, is proposed to catalyze the first step in nodulisporic acid biosynthesis via conversion of farnesyl pyrophosphate and isopentyl pyrophosphate into geranylgeranyl pyrophosphate (GGPP). Condensation of indole-3-glycerol phosphate with GGPP by the prenyl transferase nodC then forms 3-geranylgeranylindole (3-GGI). Epoxidation by the FAD-dependent monooxygenase nodM leads to a single-epoxidized-GGI that is substrate of the terpene cyclase nodB for cyclization to yield emindole SB. The terminal methyl carbon, C28, of emindole SB is then oxidized by the cytochrome P450 monooxygenase nodW to produce nodulisporic acid F (NAF), the pentacyclic core of NAA. NAF is converted to nodulisporic acid E (NAE) via prenylation. This step is probably performed by one of the indole diterpene prenyltransferases nodD1 or nodD2. Several oxidation steps performed by the FAD-linked oxidoreductase nodO and one of the cytochrome P450 monooxygenase nodR, nodX or nodZ further convert NAE to nodulisporic acid D (NAD). NAD is substrate of cytochrome P450 monooxygenase nodJ to produce the precursor of nodulisporic acid C (NAC), converted to NAC by one of the indole diterpene prenyltransferases nodD1 or nodD2. The FAD-dependent monooxygenase nodY2 then oxidizes NAC to nodulisporic acid B (NAB). Finally NAB is converted to NAA by one of the cytochrome P450 monooxygenases nodR, nodX or nodZ. The polypeptide is Cytochrome P450 monooxygenase nodZ (Hypoxylon pulicicidum).